Here is a 349-residue protein sequence, read N- to C-terminus: Isopentenyl-diphosphate delta-isomerase (349 aa).

6 to 7 is a binding site for substrate; sequence RK. FMN-binding positions include 62-64, Ser-93, and Asn-122; that span reads AMT. Residue Gln-152 coordinates substrate. Glu-153 provides a ligand contact to Mg(2+). FMN contacts are provided by residues Lys-184, Thr-214, 258-259, and 280-281; these read GG and AG.

It belongs to the IPP isomerase type 2 family. As to quaternary structure, homooctamer. Dimer of tetramers. FMN is required as a cofactor. It depends on NADPH as a cofactor. Mg(2+) serves as cofactor.

Its subcellular location is the cytoplasm. The catalysed reaction is isopentenyl diphosphate = dimethylallyl diphosphate. Its function is as follows. Involved in the biosynthesis of isoprenoids. Catalyzes the 1,3-allylic rearrangement of the homoallylic substrate isopentenyl (IPP) to its allylic isomer, dimethylallyl diphosphate (DMAPP). This Bacillus thuringiensis subsp. konkukian (strain 97-27) protein is Isopentenyl-diphosphate delta-isomerase.